A 365-amino-acid polypeptide reads, in one-letter code: Quinolone epoxide rearrangement protein asqO (365 aa).

It belongs to the quinolone epoxide rearrangement protein penF family.

The enzyme catalyses (1'E,3'E)-5-(3,3-dimethyloxiran-2-yl)-3-methylhexa-1,3-dienyl-quinolinone B = aspoquinolone A. The catalysed reaction is (1'E,3'E)-5-(3,3-dimethyloxiran-2-yl)-3-methylhexa-1,3-dienyl-quinolinone B = aspoquinolone B. It participates in secondary metabolite biosynthesis. Its pathway is alkaloid biosynthesis. The protein operates within mycotoxin biosynthesis. Its function is as follows. Quinolone epoxide rearrangement protein; part of the gene cluster that mediates the biosynthesis of the aspoquinolone mycotoxins. Within the pathway, asqO catalyzes an enzymatic 3-exo-tet cyclization to yield the cyclopropyl-THF ring system in aspoquinolone. The first step of the pathway is catalyzed by the nonribosomal peptide synthetase asqK that condenses anthranilic acid and O-methyl-L-tyrosine to produce 4'-methoxycyclopeptin. 4'-methoxycyclopeptin is then converted to 4'-methoxydehydrocyclopeptin by the ketoglutarate-dependent dioxygenase asqJ. AsqJ also converts its first product 4'-methoxydehydrocyclopeptin to 4'-methoxycyclopenin. The following conversion of 4'-methoxycyclopenin into 4'-methoxyviridicatin is catalyzed by the cyclopenase asqI. 4'-methoxyviridicatin is the precursor of quinolone natural products, and is further converted to quinolinone B. The prenyltransferase asqH1 then catalyzes the canonical Friedel-Crafts alkylation of quinolinone B with dimethylallyl cation to yield dimethylallyl quinolone, which is subjected to FAD-dependent dehydrogenation by the FAD-linked oxidoreductase asqF to yield conjugated aryl diene. The delta(3') double bond then serves as the site of the second alkylation with DMAPP catalyzed by the prenyltransferase asqH2 to yield a carbenium ion intermediate, which can be attacked by H(2)O to yield a styrenyl quinolone containing a C3'-hydroxyprenyl chain. The FAD-dependent monooxygenase asqG performs epoxidation of the terminal C7'-C8' olefin. Finally, after dehydratation of the epoxide at C3 by asqC, the quinolone epoxide rearrangement protein asqO catalyzes an enzymatic 3-exo-tet cyclization to yield the cyclopropyl-THF ring system in aspoquinolone. The polypeptide is Quinolone epoxide rearrangement protein asqO (Emericella nidulans (strain FGSC A4 / ATCC 38163 / CBS 112.46 / NRRL 194 / M139) (Aspergillus nidulans)).